We begin with the raw amino-acid sequence, 176 residues long: 3-hydroxydecanoyl-[acyl-carrier-protein] dehydratase (176 aa).

Residue His-75 is part of the active site.

This sequence belongs to the thioester dehydratase family. FabA subfamily. As to quaternary structure, homodimer.

It localises to the cytoplasm. It catalyses the reaction a (3R)-hydroxyacyl-[ACP] = a (2E)-enoyl-[ACP] + H2O. The enzyme catalyses (3R)-hydroxydecanoyl-[ACP] = (2E)-decenoyl-[ACP] + H2O. The catalysed reaction is (2E)-decenoyl-[ACP] = (3Z)-decenoyl-[ACP]. It participates in lipid metabolism; fatty acid biosynthesis. In terms of biological role, necessary for the introduction of cis unsaturation into fatty acids. Catalyzes the dehydration of (3R)-3-hydroxydecanoyl-ACP to E-(2)-decenoyl-ACP and then its isomerization to Z-(3)-decenoyl-ACP. Can catalyze the dehydratase reaction for beta-hydroxyacyl-ACPs with saturated chain lengths up to 16:0, being most active on intermediate chain length. The chain is 3-hydroxydecanoyl-[acyl-carrier-protein] dehydratase from Actinobacillus pleuropneumoniae serotype 5b (strain L20).